Here is a 290-residue protein sequence, read N- to C-terminus: Acetyl-coenzyme A carboxylase carboxyl transferase subunit beta (290 aa).

A CoA carboxyltransferase N-terminal domain is found at 30 to 290 (IMTKCPKCKK…HAGQEVNKDA (261 aa)). C34, C37, C53, and C56 together coordinate Zn(2+). The segment at 34-56 (CPKCKKIMYTKELSENLNVCFNC) adopts a C4-type zinc-finger fold.

This sequence belongs to the AccD/PCCB family. As to quaternary structure, acetyl-CoA carboxylase is a heterohexamer composed of biotin carboxyl carrier protein (AccB), biotin carboxylase (AccC) and two subunits each of ACCase subunit alpha (AccA) and ACCase subunit beta (AccD). Zn(2+) is required as a cofactor.

The protein resides in the cytoplasm. It catalyses the reaction N(6)-carboxybiotinyl-L-lysyl-[protein] + acetyl-CoA = N(6)-biotinyl-L-lysyl-[protein] + malonyl-CoA. It participates in lipid metabolism; malonyl-CoA biosynthesis; malonyl-CoA from acetyl-CoA: step 1/1. Functionally, component of the acetyl coenzyme A carboxylase (ACC) complex. Biotin carboxylase (BC) catalyzes the carboxylation of biotin on its carrier protein (BCCP) and then the CO(2) group is transferred by the transcarboxylase to acetyl-CoA to form malonyl-CoA. This is Acetyl-coenzyme A carboxylase carboxyl transferase subunit beta from Staphylococcus carnosus (strain TM300).